We begin with the raw amino-acid sequence, 622 residues long: FERM domain-containing protein 6 (622 aa).

Positions 16 to 328 (RRVCIFLPND…NSHRLYMNLQ (313 aa)) constitute an FERM domain. The segment at 357 to 452 (LDMDPLEKRS…KDRLEEDSQD (96 aa)) is disordered. 2 stretches are compositionally biased toward low complexity: residues 384 to 395 (HSTASHSSSHTS) and 425 to 438 (SSMT…TSGV). Serine 522 carries the phosphoserine modification. At threonine 523 the chain carries Phosphothreonine. Phosphoserine occurs at positions 525, 542, and 544.

The protein localises to the cytoplasm. The protein resides in the cell membrane. This is FERM domain-containing protein 6 (Frmd6) from Mus musculus (Mouse).